The following is a 24-amino-acid chain: Coenzyme PQQ synthesis protein A (24 aa).

A cross-link (pyrroloquinoline quinone (Glu-Tyr)) is located at residues 16 to 20 (EVTMY).

It belongs to the PqqA family.

It participates in cofactor biosynthesis; pyrroloquinoline quinone biosynthesis. Its function is as follows. Required for coenzyme pyrroloquinoline quinone (PQQ) biosynthesis. PQQ is probably formed by cross-linking a specific glutamate to a specific tyrosine residue and excising these residues from the peptide. This Methylococcus capsulatus (strain ATCC 33009 / NCIMB 11132 / Bath) protein is Coenzyme PQQ synthesis protein A.